We begin with the raw amino-acid sequence, 404 residues long: MLRAIAEERGRLSLRREVCGLGCFKDDRIVFWTWMFSTYFMEKLAPRQDDMLFYVRRKRAYPGNEGTIDGRKAEAEPEVEVEVYRRDSKKLPGLGDPDIDWEESVCLNLILQKLDYMVTCAVCTRADGGDIHIHRKKSQQVFASPSKHPMDSKGEESKMSYPNIFFMIDSFEEVFSDMTVGEGEMVCVELVASDKTNTFQGVIFQGSIRYEALKKVYDNRVSVAARMAQKMSFGFYKYNNMEFVRMKGPQGKGHAEMAVSRVSTGDTSPCGTEDSSPASPMHERVTSFSTPPTPERNNRPAFFSPSLKRKVPRNRIAEMKKSHSANDSEEFFREDDSGADLHNATNLRSRSLSGTGRSLVGSWLKLNRADGNFLLYAHLTYVTLPLHRILTDILEVRQKPILMT.

Residues 262–278 (VSTGDTSPCGTEDSSPA) show a composition bias toward polar residues. Disordered stretches follow at residues 262 to 307 (VSTG…SPSL) and 319 to 340 (MKKS…SGAD). 3 positions are modified to phosphoserine: S268, S276, and S279. T290 and T293 each carry phosphothreonine. A phosphoserine mark is found at S304, S306, S324, S358, and S362. Positions 319 to 336 (MKKSHSANDSEEFFREDD) are enriched in basic and acidic residues.

This is an uncharacterized protein from Mus musculus (Mouse).